The primary structure comprises 190 residues: Ion-translocating oxidoreductase complex subunit B (190 aa).

The hydrophobic stretch occupies residues 1–26 (MLTFWLAVATLSALALVAGAVLGFAA). One can recognise a 4Fe-4S domain in the interval 32–90 (KTDPVAERIDALLPQSQCAQCGYPGCRPYAEAVAGGAPINKCVPGGEAVMLKIAAQLSV). Residues Cys-49, Cys-52, Cys-57, Cys-73, Cys-115, Cys-118, Cys-121, Cys-125, Cys-145, Cys-148, Cys-151, and Cys-155 each contribute to the [4Fe-4S] cluster site. 4Fe-4S ferredoxin-type domains lie at 106-135 (RVAWIDEGNCIGCTKCIQACPVDAIVGATR) and 136-165 (AVHTVVSDLCTGCDLCVAPCPTNCIEMRPL).

This sequence belongs to the 4Fe4S bacterial-type ferredoxin family. RnfB subfamily. In terms of assembly, the complex is composed of six subunits: RnfA, RnfB, RnfC, RnfD, RnfE and RnfG. Requires [4Fe-4S] cluster as cofactor.

The protein resides in the cell inner membrane. Part of a membrane-bound complex that couples electron transfer with translocation of ions across the membrane. The chain is Ion-translocating oxidoreductase complex subunit B from Sodalis glossinidius (strain morsitans).